The sequence spans 539 residues: Chaperone Ric-8A (539 aa).

This sequence belongs to the synembryn family.

Its subcellular location is the cytoplasm. The protein localises to the cell cortex. Its function is as follows. Chaperone that specifically binds and folds nascent G alpha proteins prior to G protein heterotrimer formation, promoting their stability and activity: folds GNAI1, GNAO1, GNA13 and GNAQ. Does not fold G(s) G-alpha proteins GNAS nor GNAL. Also acts as a guanine nucleotide exchange factor (GEF) for G alpha proteins by stimulating exchange of bound GDP for free GTP. This Xenopus tropicalis (Western clawed frog) protein is Chaperone Ric-8A (ric8a).